A 200-amino-acid chain; its full sequence is Segregation and condensation protein B (200 aa).

The protein belongs to the ScpB family. As to quaternary structure, homodimer. Homodimerization may be required to stabilize the binding of ScpA to the Smc head domains. Component of a cohesin-like complex composed of ScpA, ScpB and the Smc homodimer, in which ScpA and ScpB bind to the head domain of Smc. The presence of the three proteins is required for the association of the complex with DNA.

The protein localises to the cytoplasm. Participates in chromosomal partition during cell division. May act via the formation of a condensin-like complex containing Smc and ScpA that pull DNA away from mid-cell into both cell halves. The chain is Segregation and condensation protein B from Lactobacillus delbrueckii subsp. bulgaricus (strain ATCC 11842 / DSM 20081 / BCRC 10696 / JCM 1002 / NBRC 13953 / NCIMB 11778 / NCTC 12712 / WDCM 00102 / Lb 14).